The sequence spans 402 residues: Flavohemoprotein (402 aa).

The Globin domain occupies 1–136 (MLSEKTIEIV…IADAFISIEA (136 aa)). A heme b-binding site is contributed by histidine 85. Active-site charge relay system residues include tyrosine 95 and glutamate 135. The reductase stretch occupies residues 147–402 (GGWKDFRNFV…EFFGPAASLQ (256 aa)). An FAD-binding FR-type domain is found at 150-260 (KDFRNFVVVK…SAPAGDFVLN (111 aa)). Residues tyrosine 188 and 204–207 (RQYS) contribute to the FAD site. 273–278 (GVGITP) lines the NADP(+) pocket. 394–397 (FFGP) contacts FAD.

This sequence belongs to the globin family. Two-domain flavohemoproteins subfamily. In the C-terminal section; belongs to the flavoprotein pyridine nucleotide cytochrome reductase family. Requires heme b as cofactor. FAD serves as cofactor.

It carries out the reaction 2 nitric oxide + NADPH + 2 O2 = 2 nitrate + NADP(+) + H(+). The enzyme catalyses 2 nitric oxide + NADH + 2 O2 = 2 nitrate + NAD(+) + H(+). Is involved in NO detoxification in an aerobic process, termed nitric oxide dioxygenase (NOD) reaction that utilizes O(2) and NAD(P)H to convert NO to nitrate, which protects the bacterium from various noxious nitrogen compounds. Therefore, plays a central role in the inducible response to nitrosative stress. This is Flavohemoprotein from Bacillus anthracis.